Consider the following 450-residue polypeptide: Tubulin alpha chain (450 aa).

Residue Q11 coordinates GTP. K40 is modified (N6-acetyllysine). Residues E71, G144, T145, T179, N206, and N228 each contribute to the GTP site. E71 serves as a coordination point for Mg(2+). Residue E254 is part of the active site.

Belongs to the tubulin family. In terms of assembly, dimer of alpha and beta chains. A typical microtubule is a hollow water-filled tube with an outer diameter of 25 nm and an inner diameter of 15 nM. Alpha-beta heterodimers associate head-to-tail to form protofilaments running lengthwise along the microtubule wall with the beta-tubulin subunit facing the microtubule plus end conferring a structural polarity. Microtubules usually have 13 protofilaments but different protofilament numbers can be found in some organisms and specialized cells. Mg(2+) is required as a cofactor. Undergoes a tyrosination/detyrosination cycle, the cyclic removal and re-addition of a C-terminal tyrosine residue by the enzymes tubulin tyrosine carboxypeptidase (TTCP) and tubulin tyrosine ligase (TTL), respectively. Post-translationally, acetylation of alpha chains at Lys-40 stabilizes microtubules and affects affinity and processivity of microtubule motors. This modification has a role in multiple cellular functions, ranging from cell motility, cell cycle progression or cell differentiation to intracellular trafficking and signaling.

Its subcellular location is the cytoplasm. The protein resides in the cytoskeleton. The enzyme catalyses GTP + H2O = GDP + phosphate + H(+). Tubulin is the major constituent of microtubules, a cylinder consisting of laterally associated linear protofilaments composed of alpha- and beta-tubulin heterodimers. Microtubules grow by the addition of GTP-tubulin dimers to the microtubule end, where a stabilizing cap forms. Below the cap, tubulin dimers are in GDP-bound state, owing to GTPase activity of alpha-tubulin. The sequence is that of Tubulin alpha chain (TUBA) from Prunus dulcis (Almond).